A 537-amino-acid polypeptide reads, in one-letter code: CTP synthase (537 aa).

The tract at residues 1-268 (MNTKYIFVTG…DNLVCKKLKL (268 aa)) is amidoligase domain. Residue Ser-14 coordinates CTP. Ser-14 contacts UTP. 15 to 20 (SLGKGI) is a binding site for ATP. Tyr-55 provides a ligand contact to L-glutamine. Asp-72 contributes to the ATP binding site. Residues Asp-72 and Glu-142 each contribute to the Mg(2+) site. Residues 149–151 (DIE), 189–194 (KTKPTQ), and Lys-225 each bind CTP. UTP-binding positions include 189–194 (KTKPTQ) and Lys-225. One can recognise a Glutamine amidotransferase type-1 domain in the interval 293–535 (NIALVGKYVE…IKASLNSKHK (243 aa)). Gly-355 contacts L-glutamine. Catalysis depends on Cys-382, which acts as the Nucleophile; for glutamine hydrolysis. Residues 383-386 (LGMQ), Glu-406, and Arg-463 each bind L-glutamine. Residues His-508 and Glu-510 contribute to the active site.

This sequence belongs to the CTP synthase family. In terms of assembly, homotetramer.

It carries out the reaction UTP + L-glutamine + ATP + H2O = CTP + L-glutamate + ADP + phosphate + 2 H(+). It catalyses the reaction L-glutamine + H2O = L-glutamate + NH4(+). The catalysed reaction is UTP + NH4(+) + ATP = CTP + ADP + phosphate + 2 H(+). It functions in the pathway pyrimidine metabolism; CTP biosynthesis via de novo pathway; CTP from UDP: step 2/2. Allosterically activated by GTP, when glutamine is the substrate; GTP has no effect on the reaction when ammonia is the substrate. The allosteric effector GTP functions by stabilizing the protein conformation that binds the tetrahedral intermediate(s) formed during glutamine hydrolysis. Inhibited by the product CTP, via allosteric rather than competitive inhibition. Functionally, catalyzes the ATP-dependent amination of UTP to CTP with either L-glutamine or ammonia as the source of nitrogen. Regulates intracellular CTP levels through interactions with the four ribonucleotide triphosphates. This is CTP synthase from Clostridium kluyveri (strain ATCC 8527 / DSM 555 / NBRC 12016 / NCIMB 10680 / K1).